The primary structure comprises 335 residues: Acetyl-coenzyme A carboxylase carboxyl transferase subunit alpha (335 aa).

One can recognise a CoA carboxyltransferase C-terminal domain in the interval 40-294; the sequence is QLETLATRRR…KEAIEKHLDT (255 aa).

The protein belongs to the AccA family. Acetyl-CoA carboxylase is a heterohexamer composed of biotin carboxyl carrier protein (AccB), biotin carboxylase (AccC) and two subunits each of ACCase subunit alpha (AccA) and ACCase subunit beta (AccD).

Its subcellular location is the cytoplasm. It catalyses the reaction N(6)-carboxybiotinyl-L-lysyl-[protein] + acetyl-CoA = N(6)-biotinyl-L-lysyl-[protein] + malonyl-CoA. The protein operates within lipid metabolism; malonyl-CoA biosynthesis; malonyl-CoA from acetyl-CoA: step 1/1. Its function is as follows. Component of the acetyl coenzyme A carboxylase (ACC) complex. First, biotin carboxylase catalyzes the carboxylation of biotin on its carrier protein (BCCP) and then the CO(2) group is transferred by the carboxyltransferase to acetyl-CoA to form malonyl-CoA. In Prochlorococcus marinus (strain MIT 9312), this protein is Acetyl-coenzyme A carboxylase carboxyl transferase subunit alpha.